The primary structure comprises 399 residues: [Pyruvate dehydrogenase (acetyl-transferring)] kinase, mitochondrial (399 aa).

A mitochondrion-targeting transit peptide spans 1–18 (MFLTRRLLGPFTSAIARK). Residues 123 to 360 (VVETMAEGLI…DAMIFLKAIP (238 aa)) form the Histidine kinase domain. Residues 247 to 254 (ELFKNSMR), aspartate 286, 305 to 306 (ST), and 321 to 326 (GYGYGL) contribute to the ATP site.

Belongs to the PDK/BCKDK protein kinase family.

The protein localises to the mitochondrion matrix. The catalysed reaction is L-seryl-[pyruvate dehydrogenase E1 alpha subunit] + ATP = O-phospho-L-seryl-[pyruvate dehydrogenase E1 alpha subunit] + ADP + H(+). Inhibits the mitochondrial pyruvate dehydrogenase complex by phosphorylation of the E1 alpha subunit, thus contributing to the regulation of glucose metabolism. In Ascaris suum (Pig roundworm), this protein is [Pyruvate dehydrogenase (acetyl-transferring)] kinase, mitochondrial.